The chain runs to 534 residues: CTP synthase (534 aa).

The interval 1–266 (MKTKFIFVTG…DEQVVEKLNI (266 aa)) is amidoligase domain. Ser-14 is a CTP binding site. UTP is bound at residue Ser-14. ATP is bound by residues 15–20 (SIGKGL) and Asp-72. The Mg(2+) site is built by Asp-72 and Glu-140. Residues 147 to 149 (DIE), 187 to 192 (KTKPTQ), and Lys-223 contribute to the CTP site. UTP contacts are provided by residues 187 to 192 (KTKPTQ) and Lys-223. Residues 292 to 534 (RIAIVGKYVN…IAAALHNIKA (243 aa)) enclose the Glutamine amidotransferase type-1 domain. L-glutamine is bound at residue Gly-354. Cys-381 (nucleophile; for glutamine hydrolysis) is an active-site residue. L-glutamine contacts are provided by residues 382–385 (LGMQ), Glu-405, and Arg-462. Catalysis depends on residues His-507 and Glu-509.

It belongs to the CTP synthase family. In terms of assembly, homotetramer.

It carries out the reaction UTP + L-glutamine + ATP + H2O = CTP + L-glutamate + ADP + phosphate + 2 H(+). It catalyses the reaction L-glutamine + H2O = L-glutamate + NH4(+). The catalysed reaction is UTP + NH4(+) + ATP = CTP + ADP + phosphate + 2 H(+). Its pathway is pyrimidine metabolism; CTP biosynthesis via de novo pathway; CTP from UDP: step 2/2. Allosterically activated by GTP, when glutamine is the substrate; GTP has no effect on the reaction when ammonia is the substrate. The allosteric effector GTP functions by stabilizing the protein conformation that binds the tetrahedral intermediate(s) formed during glutamine hydrolysis. Inhibited by the product CTP, via allosteric rather than competitive inhibition. In terms of biological role, catalyzes the ATP-dependent amination of UTP to CTP with either L-glutamine or ammonia as the source of nitrogen. Regulates intracellular CTP levels through interactions with the four ribonucleotide triphosphates. In Geotalea uraniireducens (strain Rf4) (Geobacter uraniireducens), this protein is CTP synthase.